Reading from the N-terminus, the 428-residue chain is Light-independent protochlorophyllide reductase subunit N (428 aa).

[4Fe-4S] cluster-binding residues include Cys-31, Cys-56, and Cys-117.

Belongs to the BchN/ChlN family. As to quaternary structure, protochlorophyllide reductase is composed of three subunits; BchL, BchN and BchB. Forms a heterotetramer of two BchB and two BchN subunits. [4Fe-4S] cluster is required as a cofactor.

It carries out the reaction chlorophyllide a + oxidized 2[4Fe-4S]-[ferredoxin] + 2 ADP + 2 phosphate = protochlorophyllide a + reduced 2[4Fe-4S]-[ferredoxin] + 2 ATP + 2 H2O. The protein operates within porphyrin-containing compound metabolism; bacteriochlorophyll biosynthesis (light-independent). Component of the dark-operative protochlorophyllide reductase (DPOR) that uses Mg-ATP and reduced ferredoxin to reduce ring D of protochlorophyllide (Pchlide) to form chlorophyllide a (Chlide). This reaction is light-independent. The NB-protein (BchN-BchB) is the catalytic component of the complex. This is Light-independent protochlorophyllide reductase subunit N from Rhodopseudomonas palustris (strain HaA2).